Reading from the N-terminus, the 105-residue chain is Large ribosomal subunit protein bL21 (105 aa).

It belongs to the bacterial ribosomal protein bL21 family. As to quaternary structure, part of the 50S ribosomal subunit. Contacts protein L20.

Its function is as follows. This protein binds to 23S rRNA in the presence of protein L20. In Phocaeicola vulgatus (strain ATCC 8482 / DSM 1447 / JCM 5826 / CCUG 4940 / NBRC 14291 / NCTC 11154) (Bacteroides vulgatus), this protein is Large ribosomal subunit protein bL21.